The sequence spans 482 residues: Guanine nucleotide exchange factor SRM1 (482 aa).

The segment covering 1–11 (MVKRTVATNGD) has biased composition (polar residues). The disordered stretch occupies residues 1–22 (MVKRTVATNGDASGAHRAKKMS). The short motif at 15–26 (AHRAKKMSKTHA) is the Nuclear localization signal element. 7 RCC1 repeats span residues 45–101 (PLDI…ALDE), 103–152 (SNVW…TPAK), 183–238 (NGEV…FLDE), 239–291 (EGMV…ALTK), 292–347 (DNKL…ILSQ), 349–411 (GDLY…AVAQ), and 412–466 (NGIA…SGGV). Positions 128–158 (KDMDADDSSDDEDGDLNELESTPAKIPRESF) are disordered. The segment covering 131–145 (DADDSSDDEDGDLNE) has biased composition (acidic residues). A phosphoserine mark is found at Ser-135 and Ser-136.

As to quaternary structure, component of a multicomponent complex composed of six to seven proteins, which has a collective molecular mass greater than 150 kDa. Interacts with GSP1 and YRB2. Phosphorylated; possibly by KSP1.

It localises to the nucleus. Its function is as follows. Guanine nucleotide exchange factor that promotes the exchange of GSP1/GSP2-bound GDP by GTP and controls RNA metabolism and transport. Involved in yeast pheromone response pathway and in mRNA metabolism. Involved in nuclear pore complex (NPC) assembly and required for mRNA and ribosome nuclear export. Binds chromatin and is involved NPC-mediated transcriptional control. This chain is Guanine nucleotide exchange factor SRM1 (SRM1), found in Saccharomyces cerevisiae (strain ATCC 204508 / S288c) (Baker's yeast).